We begin with the raw amino-acid sequence, 476 residues long: Protein DETOXIFICATION 17 (476 aa).

The next 12 membrane-spanning stretches (helical) occupy residues 29-51 (LWLSAPLIGVSLLQYSLQVISVM), 70-90 (FASVTGFTFLLGTASALETLC), 111-131 (FVLLILSVPLSIIWANTEQIL), 140-160 (IASVAGSYAKYMIPSLFAYGL), 177-197 (VFVCSGITTCLHLLLCWLFVL), 205-225 (GAALAISVSYWFNVILLSCYV), 252-272 (IAFPSAVMVCLELWSFELLVL), 286-306 (VLSICLNTSLTIWQISVGLGG), 326-346 (LAVYVIVGIAVAEGIVVVTVL), 363-383 (IIAYAASMIPIVACGNFLDGL), 405-425 (LGSYYLVGVPLGLLLGFHFHI), and 431-451 (WLGIVTALSVQVLCLSLVTIF).

It belongs to the multi antimicrobial extrusion (MATE) (TC 2.A.66.1) family.

Its subcellular location is the membrane. This is Protein DETOXIFICATION 17 from Arabidopsis thaliana (Mouse-ear cress).